The primary structure comprises 355 residues: Chemerin-like receptor 2 (355 aa).

Residues 1 to 41 (MEDLEETLFEEFENYSYALDYYSLESDLEEKVQLGVVHWVS) lie on the Extracellular side of the membrane. N14 carries an N-linked (GlcNAc...) asparagine glycan. Residues 42–62 (LVLYCLSFVLGIPGNAIVIWF) traverse the membrane as a helical segment. Residues 63-73 (TGFKWKRTVST) lie on the Cytoplasmic side of the membrane. The helical transmembrane segment at 74–94 (LWFLNLAIADFIFLLFLPLYI) threads the bilayer. Topologically, residues 95-112 (SYVVMNFHWPFGIWLCKA) are extracellular. C110 and C187 form a disulfide bridge. Residues 113-133 (NSFTAQLNMFASVFFLTVISL) form a helical membrane-spanning segment. The Cytoplasmic portion of the chain corresponds to 134 to 154 (DHYIHLIHPVLSHRHRTLKNS). A helical transmembrane segment spans residues 155–175 (LIVIIFIWLLASLIGGPALYF). Residues 176-210 (RDTVEFNNHTLCYNNFQKHDPDLTVIRHHVLTWVK) are Extracellular-facing. A helical membrane pass occupies residues 211 to 231 (YIVGYLFPLLTMSICYLCLIL). The Cytoplasmic segment spans residues 232–247 (KVKKRSILISSRHFWT). The chain crosses the membrane as a helical span at residues 248–268 (ILAVVVAFVVCWTPYHLFSIW). The Extracellular portion of the chain corresponds to 269 to 286 (ELTIHHNSYSHHVMQAGI). The chain crosses the membrane as a helical span at residues 287–307 (PLSTGLAFLNSCLNPILYVLI). Residues 308-355 (SKKFQARFRSSVAEILKYTLWEVSCSGTVSEQLRNSETKNLCLLETAQ) lie on the Cytoplasmic side of the membrane.

This sequence belongs to the chemokine-like receptor (CMKLR) family.

It localises to the cell membrane. Functionally, receptor for chemoattractant adipokine chemerin/RARRES2 suggesting a role for this receptor in the regulation of inflammation and energy homesotasis. Signals mainly via beta-arrestin pathway. Binding of RARRES2 activates weakly G proteins, calcium mobilization and MAPK1/MAPK3 (ERK1/2) phosphorylation too. Acts also as a receptor for TAFA1, mediates its effects on neuronal stem-cell proliferation and differentiation via the activation of ROCK/ERK and ROCK/STAT3 signaling pathway. In Macaca fascicularis (Crab-eating macaque), this protein is Chemerin-like receptor 2 (CMKLR2).